We begin with the raw amino-acid sequence, 303 residues long: Quinolinate synthase (303 aa).

His-24 and Ser-41 together coordinate iminosuccinate. Cys-86 provides a ligand contact to [4Fe-4S] cluster. Iminosuccinate is bound by residues 112–114 and Ser-129; that span reads YVN. Residue Cys-172 coordinates [4Fe-4S] cluster. Iminosuccinate is bound by residues 198–200 and Thr-215; that span reads HPE. Cys-260 provides a ligand contact to [4Fe-4S] cluster.

The protein belongs to the quinolinate synthase family. Type 2 subfamily. [4Fe-4S] cluster serves as cofactor.

It is found in the cytoplasm. The enzyme catalyses iminosuccinate + dihydroxyacetone phosphate = quinolinate + phosphate + 2 H2O + H(+). It participates in cofactor biosynthesis; NAD(+) biosynthesis; quinolinate from iminoaspartate: step 1/1. Catalyzes the condensation of iminoaspartate with dihydroxyacetone phosphate to form quinolinate. The chain is Quinolinate synthase from Clostridium kluyveri (strain NBRC 12016).